A 267-amino-acid polypeptide reads, in one-letter code: Distal basal body ring component protein (267 aa).

A signal peptide spans 1-29 (MKAFLFAAAATLVITALSAPAFAGTPVTL).

As to quaternary structure, flaD is a subunit of the flagellar transenvelope basal body.

It is found in the periplasm. Its subcellular location is the bacterial flagellum basal body. In terms of biological role, flaD might be the structural protein of the distal basal body ring P, or it is necessary for the assembly of the P ring. The sequence is that of Distal basal body ring component protein (flaD) from Caulobacter vibrioides (strain ATCC 19089 / CIP 103742 / CB 15) (Caulobacter crescentus).